A 267-amino-acid chain; its full sequence is L-erythrulose-1-phosphate isomerase (267 aa).

His95 (electrophile) is an active-site residue. Glu168 (proton acceptor) is an active-site residue. Substrate contacts are provided by Gly174 and Ser211.

Belongs to the triosephosphate isomerase family. As to quaternary structure, homodimer.

The protein localises to the cytoplasm. The catalysed reaction is L-erythrulose 1-phosphate = D-erythrulose 4-phosphate. Its pathway is carbohydrate metabolism; erythritol degradation. Its function is as follows. Catalyzes the isomerization of D-erythrulose-4P to L-erythrulose-1P. This is L-erythrulose-1-phosphate isomerase from Rhizobium etli (strain ATCC 51251 / DSM 11541 / JCM 21823 / NBRC 15573 / CFN 42).